Reading from the N-terminus, the 874-residue chain is Alanine--tRNA ligase (874 aa).

His-564, His-568, Cys-665, and His-669 together coordinate Zn(2+).

It belongs to the class-II aminoacyl-tRNA synthetase family. Zn(2+) is required as a cofactor.

It is found in the cytoplasm. The catalysed reaction is tRNA(Ala) + L-alanine + ATP = L-alanyl-tRNA(Ala) + AMP + diphosphate. In terms of biological role, catalyzes the attachment of alanine to tRNA(Ala) in a two-step reaction: alanine is first activated by ATP to form Ala-AMP and then transferred to the acceptor end of tRNA(Ala). Also edits incorrectly charged Ser-tRNA(Ala) and Gly-tRNA(Ala) via its editing domain. The protein is Alanine--tRNA ligase of Paraburkholderia xenovorans (strain LB400).